The primary structure comprises 308 residues: Protein translocase subunit SecF (308 aa).

Helical transmembrane passes span 18-38 (AYVFSGVLILLSLVSLVTRGL), 134-154 (GAIYSILGALLVIFVYILIRF), 160-180 (LGAVVALFHDVLITLGLFSLL), 193-213 (TIIAAFLTIVGYSLNDTVVVF), 244-264 (IITSGTTLLVVVILFIFGGEV), and 272-292 (LIVGIVIGTYSSIFVASPVVI).

Belongs to the SecD/SecF family. SecF subfamily. In terms of assembly, forms a complex with SecD. Part of the essential Sec protein translocation apparatus which comprises SecA, SecYEG and auxiliary proteins SecDF. Other proteins may also be involved.

Its subcellular location is the cell inner membrane. Part of the Sec protein translocase complex. Interacts with the SecYEG preprotein conducting channel. SecDF uses the proton motive force (PMF) to complete protein translocation after the ATP-dependent function of SecA. The chain is Protein translocase subunit SecF from Rhodothermus marinus (strain ATCC 43812 / DSM 4252 / R-10) (Rhodothermus obamensis).